Reading from the N-terminus, the 262-residue chain is Lysosomal-associated transmembrane protein 5 (262 aa).

5 consecutive transmembrane segments (helical) span residues 19–39, 64–84, 92–112, 134–154, and 184–204; these read IATT…FIEH, ISSF…LIGV, LLPF…TLLG, FPLM…LCSS, and FIKM…FKVY. Position 259 is a phosphotyrosine (Y259).

Belongs to the LAPTM4/LAPTM5 transporter family. Binds to ubiquitin. As to expression, preferentially expressed in adult hematopoietic tissues. High levels in lymphoid and myeloid tissues. Highly expressed in peripheral blood leukocytes, thymus, spleen and lung, followed by placenta, liver and kidney.

It localises to the lysosome membrane. May have a special functional role during embryogenesis and in adult hematopoietic cells. The polypeptide is Lysosomal-associated transmembrane protein 5 (LAPTM5) (Homo sapiens (Human)).